A 196-amino-acid polypeptide reads, in one-letter code: Guanylate kinase (196 aa).

Residues 1–24 (MPVESGAGNDQPKRLTVLSGPSGV) are disordered. The region spanning 13-191 (KRLTVLSGPS…VCDELLALIA (179 aa)) is the Guanylate kinase-like domain. ATP is bound at residue 20–27 (GPSGVGKS).

Belongs to the guanylate kinase family.

Its subcellular location is the cytoplasm. The catalysed reaction is GMP + ATP = GDP + ADP. In terms of biological role, essential for recycling GMP and indirectly, cGMP. The sequence is that of Guanylate kinase from Thermobifida fusca (strain YX).